The chain runs to 331 residues: Probable tRNA pseudouridine synthase B (331 aa).

The span at 1 to 15 (MRCSQREVFVKREEP) shows a compositional bias: basic and acidic residues. Positions 1-27 (MRCSQREVFVKREEPTNPEWGKPPSQR) are disordered. The active-site Nucleophile is the aspartate 71. The 76-residue stretch at 238 to 313 (LPKIWVRDSA…AVVRTDRVVM (76 aa)) folds into the PUA domain.

This sequence belongs to the pseudouridine synthase TruB family. Type 2 subfamily.

The enzyme catalyses uridine(55) in tRNA = pseudouridine(55) in tRNA. Its function is as follows. Could be responsible for synthesis of pseudouridine from uracil-55 in the psi GC loop of transfer RNAs. The polypeptide is Probable tRNA pseudouridine synthase B (Pyrobaculum arsenaticum (strain DSM 13514 / JCM 11321 / PZ6)).